Here is a 319-residue protein sequence, read N- to C-terminus: Na(+)-translocating NADH-quinone reductase subunit C (319 aa).

The helical transmembrane segment at 14-34 threads the bilayer; that stretch reads WYVILFIFALSLFSSVFLSTV. Residue threonine 283 is modified to FMN phosphoryl threonine.

The protein belongs to the NqrC family. Composed of six subunits; NqrA, NqrB, NqrC, NqrD, NqrE and NqrF. FMN is required as a cofactor.

Its subcellular location is the cell inner membrane. It catalyses the reaction a ubiquinone + n Na(+)(in) + NADH + H(+) = a ubiquinol + n Na(+)(out) + NAD(+). In terms of biological role, NQR complex catalyzes the reduction of ubiquinone-1 to ubiquinol by two successive reactions, coupled with the transport of Na(+) ions from the cytoplasm to the periplasm. NqrA to NqrE are probably involved in the second step, the conversion of ubisemiquinone to ubiquinol. This Chlamydia caviae (strain ATCC VR-813 / DSM 19441 / 03DC25 / GPIC) (Chlamydophila caviae) protein is Na(+)-translocating NADH-quinone reductase subunit C.